Reading from the N-terminus, the 245-residue chain is Phycocyanobilin:ferredoxin oxidoreductase (245 aa).

It belongs to the HY2 family.

The catalysed reaction is (2R,3Z)-phycocyanobilin + 4 oxidized [2Fe-2S]-[ferredoxin] = biliverdin IXalpha + 4 reduced [2Fe-2S]-[ferredoxin] + 4 H(+). Catalyzes the four-electron reduction of biliverdin IX-alpha (2-electron reduction at both the A and D rings); the reaction proceeds via an isolatable 2-electron intermediate, 181,182-dihydrobiliverdin. The protein is Phycocyanobilin:ferredoxin oxidoreductase of Trichodesmium erythraeum (strain IMS101).